We begin with the raw amino-acid sequence, 361 residues long: MLLALFQWIAEDIRAFNVFSYITLRTMLAALTALSISFLIGPAMIRSLTTRKVGQSVRSDGPQSHLTKAGTPTMGGALILMAVIITTLLWADLSNRYIWLVLLTTLGFGAIGWVDDYRKVVQHNSKGLPASAKFFWQSIIALLVAVYLAMTAELPQHTDMIVPFFKEVAIPLGSFLFIILTYLVIVGSSNAVNLTDGLDGLAIMPTVMISGALAIFAYVAGHAIFAKYLGIPHIPSAGELAVFCGALAGAGLAFLWFNANPAEVFMGDVGALALGAALGVITVIVRQEIVLVIMGGVFVMEALSVMIQVASFKLFGRRVFRMAPLHHHYELKGWKENQVVVRFWIITIILVLIGLSTLKLR.

Helical transmembrane passes span 28–48 (LAAL…IRSL), 73–93 (TMGG…WADL), 97–117 (YIWL…VDDY), 134–154 (FFWQ…TAEL), 168–188 (VAIP…IVGS), 200–220 (GLAI…AYVA), 237–257 (AGEL…FLWF), 264–284 (VFMG…ITVI), 289–309 (IVLV…MIQV), and 338–358 (QVVV…LSTL).

It belongs to the glycosyltransferase 4 family. MraY subfamily. The cofactor is Mg(2+).

The protein localises to the cell inner membrane. It carries out the reaction UDP-N-acetyl-alpha-D-muramoyl-L-alanyl-gamma-D-glutamyl-meso-2,6-diaminopimeloyl-D-alanyl-D-alanine + di-trans,octa-cis-undecaprenyl phosphate = di-trans,octa-cis-undecaprenyl diphospho-N-acetyl-alpha-D-muramoyl-L-alanyl-D-glutamyl-meso-2,6-diaminopimeloyl-D-alanyl-D-alanine + UMP. It functions in the pathway cell wall biogenesis; peptidoglycan biosynthesis. Its function is as follows. Catalyzes the initial step of the lipid cycle reactions in the biosynthesis of the cell wall peptidoglycan: transfers peptidoglycan precursor phospho-MurNAc-pentapeptide from UDP-MurNAc-pentapeptide onto the lipid carrier undecaprenyl phosphate, yielding undecaprenyl-pyrophosphoryl-MurNAc-pentapeptide, known as lipid I. This chain is Phospho-N-acetylmuramoyl-pentapeptide-transferase, found in Nitrosomonas eutropha (strain DSM 101675 / C91 / Nm57).